Reading from the N-terminus, the 384-residue chain is Guanine nucleotide-binding protein alpha-1 subunit (384 aa).

G2 carries the N-myristoyl glycine lipid modification. C5 carries the S-palmitoyl cysteine lipid modification. In terms of domain architecture, G-alpha spans H38–L384. A G1 motif region spans residues K41–T54. Residues E49, S50, G51, K52, S53, T54, L188, Y189, T194, G222, N288, K289, D291, and A356 each coordinate GTP. Mg(2+) is bound at residue S53. The G2 motif stretch occupies residues D186–T194. Mg(2+) is bound at residue T194. A G3 motif region spans residues Y215–R224. The interval M284–D291 is G4 motif. The G5 motif stretch occupies residues T354–Q359.

The protein belongs to the G-alpha family. G proteins are composed of 3 units; alpha, beta and gamma. The alpha chain contains the guanine nucleotide binding site. Mg(2+) serves as cofactor.

In terms of biological role, guanine nucleotide-binding proteins (G proteins) are involved as modulators or transducers in various transmembrane signaling systems. This is Guanine nucleotide-binding protein alpha-1 subunit (GPA1) from Lupinus luteus (European yellow lupine).